The chain runs to 242 residues: Large ribosomal subunit protein uL1 (242 aa).

Belongs to the universal ribosomal protein uL1 family. Part of the 50S ribosomal subunit.

Its function is as follows. Binds directly to 23S rRNA. The L1 stalk is quite mobile in the ribosome, and is involved in E site tRNA release. Protein L1 is also a translational repressor protein, it controls the translation of the L11 operon by binding to its mRNA. This Streptomyces sp. (strain FRI-5) protein is Large ribosomal subunit protein uL1.